The following is a 278-amino-acid chain: C-type lectin domain family 1 member A (278 aa).

The interval methionine 1–arginine 42 is disordered. Topologically, residues methionine 1–leucine 52 are cytoplasmic. Over residues threonine 18–arginine 32 the composition is skewed to polar residues. The helical; Signal-anchor for type II membrane protein transmembrane segment at isoleucine 53–phenylalanine 73 threads the bilayer. The Extracellular segment spans residues glutamine 74–arginine 278. Asparagine 95 and asparagine 169 each carry an N-linked (GlcNAc...) asparagine glycan. The C-type lectin domain maps to histidine 144–glutamate 258. 2 cysteine pairs are disulfide-bonded: cysteine 165–cysteine 257 and cysteine 236–cysteine 249.

It is found in the membrane. The chain is C-type lectin domain family 1 member A (CLEC1A) from Bos taurus (Bovine).